The sequence spans 392 residues: Potassium/proton antiporter CemA (392 aa).

The next 4 membrane-spanning stretches (helical) occupy residues 174-194 (FLASLIWIPWIVSWFLRVWWL), 269-289 (SLANLGSDILACLILLAMLSL), 316-336 (FLILVTDVFVGFHSTHGWEVI), and 352-372 (FIFMFVATFPVLLDTVFKYWI).

The protein belongs to the CemA family.

The protein resides in the plastid. Its subcellular location is the chloroplast inner membrane. It carries out the reaction K(+)(in) + H(+)(out) = K(+)(out) + H(+)(in). In terms of biological role, contributes to K(+)/H(+) antiport activity by supporting proton efflux to control proton extrusion and homeostasis in chloroplasts in a light-dependent manner to modulate photosynthesis. Prevents excessive induction of non-photochemical quenching (NPQ) under continuous-light conditions. Indirectly promotes efficient inorganic carbon uptake into chloroplasts. The chain is Potassium/proton antiporter CemA from Nephroselmis olivacea (Green alga).